A 198-amino-acid polypeptide reads, in one-letter code: Putative pseudouridine methyltransferase (198 aa).

Residues Leu132 and Cys186 each coordinate S-adenosyl-L-methionine.

The protein belongs to the methyltransferase superfamily. TrmY family.

The protein localises to the cytoplasm. This chain is Putative pseudouridine methyltransferase, found in Shewanella frigidimarina (strain NCIMB 400).